Reading from the N-terminus, the 278-residue chain is Probable ribosomal RNA small subunit methyltransferase A (278 aa).

6 residues coordinate S-adenosyl-L-methionine: asparagine 23, leucine 25, glycine 50, glutamate 71, aspartate 95, and asparagine 110.

It belongs to the class I-like SAM-binding methyltransferase superfamily. rRNA adenine N(6)-methyltransferase family. RsmA subfamily.

The protein resides in the cytoplasm. In terms of biological role, specifically dimethylates two adjacent adenosines in the loop of a conserved hairpin near the 3'-end of 16S rRNA in the 30S particle. May play a critical role in biogenesis of 30S subunits. The chain is Probable ribosomal RNA small subunit methyltransferase A from Thermococcus gammatolerans (strain DSM 15229 / JCM 11827 / EJ3).